The following is a 93-amino-acid chain: Exodeoxyribonuclease 7 small subunit (93 aa).

Positions 1 to 17 are enriched in low complexity; the sequence is MAKSSASSLSSAKPVAA. Residues 1–22 form a disordered region; it reads MAKSSASSLSSAKPVAAGPDAS.

Belongs to the XseB family. In terms of assembly, heterooligomer composed of large and small subunits.

The protein localises to the cytoplasm. It carries out the reaction Exonucleolytic cleavage in either 5'- to 3'- or 3'- to 5'-direction to yield nucleoside 5'-phosphates.. Bidirectionally degrades single-stranded DNA into large acid-insoluble oligonucleotides, which are then degraded further into small acid-soluble oligonucleotides. The sequence is that of Exodeoxyribonuclease 7 small subunit from Polaromonas naphthalenivorans (strain CJ2).